Here is an 83-residue protein sequence, read N- to C-terminus: Large ribosomal subunit protein bL31B (83 aa).

This sequence belongs to the bacterial ribosomal protein bL31 family. Type B subfamily. In terms of assembly, part of the 50S ribosomal subunit.

The sequence is that of Large ribosomal subunit protein bL31B from Tropheryma whipplei (strain TW08/27) (Whipple's bacillus).